A 334-amino-acid polypeptide reads, in one-letter code: Fructose-1,6-bisphosphatase class 1 (334 aa).

4 residues coordinate Mg(2+): Glu89, Asp112, Leu114, and Asp115. Substrate is bound by residues 115-118, Asn208, Tyr241, 259-261, and Lys271; these read DGSS and YLY. Glu277 provides a ligand contact to Mg(2+).

This sequence belongs to the FBPase class 1 family. As to quaternary structure, homotetramer. Mg(2+) is required as a cofactor.

The protein resides in the cytoplasm. It carries out the reaction beta-D-fructose 1,6-bisphosphate + H2O = beta-D-fructose 6-phosphate + phosphate. Its pathway is carbohydrate biosynthesis; gluconeogenesis. This chain is Fructose-1,6-bisphosphatase class 1, found in Pectobacterium atrosepticum (strain SCRI 1043 / ATCC BAA-672) (Erwinia carotovora subsp. atroseptica).